The following is a 298-amino-acid chain: MSTSVPVKKALSALLRDPGNSHCADCKAQLHPRWASWSLGVFICIKCAGIHRSLGTHISKVKSVDLDTWKEEHLVKLIQFKNNLRANSYYEATLADELKQRKITDTSSLQNFIKNKYEYKKWIGDLSSIEGLNDSTEPVLHKPSANHSLPASNARLDQSSNSLQKTQTQPPSHLLSTSRSNTSLLNLQVSSLSKTTSNTSVTSSATSIGAANTKTGNRVGEFGQRNDLKKSILSLYSKPSAQTQSQNSFFTSTTPQPCNTPSPFVNTGITATNNNSMNSNSSSNISLDDNELFKNVWS.

Ser2 carries the post-translational modification N-acetylserine. The Arf-GAP domain maps to 8 to 130; that stretch reads KKALSALLRD…KWIGDLSSIE (123 aa). The segment at 23-47 adopts a C4-type zinc-finger fold; sequence CADCKAQLHPRWASWSLGVFICIKC. The interval 137 to 180 is disordered; it reads EPVLHKPSANHSLPASNARLDQSSNSLQKTQTQPPSHLLSTSRS. A compositionally biased stretch (polar residues) spans 145-171; it reads ANHSLPASNARLDQSSNSLQKTQTQPP. Phosphoserine is present on residues Ser180, Ser183, and Ser207.

Its subcellular location is the cytoplasm. The protein localises to the golgi apparatus. In terms of biological role, GTPase-activating protein for the ADP ribosylation factor family. The sequence is that of ADP-ribosylation factor GTPase-activating protein effector protein 2 (AGE2) from Saccharomyces cerevisiae (strain ATCC 204508 / S288c) (Baker's yeast).